The following is a 394-amino-acid chain: Flap endonuclease 1 (394 aa).

The interval Met-1–Lys-104 is N-domain. Asp-34 serves as a coordination point for Mg(2+). DNA is bound by residues Arg-47 and Arg-70. Mg(2+) contacts are provided by Asp-86, Glu-158, Glu-160, Asp-179, and Asp-181. An I-domain region spans residues Asp-122–His-253. Glu-158 is a DNA binding site. DNA contacts are provided by Gly-231 and Asp-233. Asp-233 contributes to the Mg(2+) binding site. Positions Gln-341–Phe-349 are interaction with PCNA. The segment covering Glu-356–Glu-383 has biased composition (basic and acidic residues). A disordered region spans residues Glu-356–Ala-394. Residues Lys-384–Ala-394 show a composition bias toward basic residues.

This sequence belongs to the XPG/RAD2 endonuclease family. FEN1 subfamily. In terms of assembly, interacts with PCNA. Three molecules of FEN1 bind to one PCNA trimer with each molecule binding to one PCNA monomer. PCNA stimulates the nuclease activity without altering cleavage specificity. Mg(2+) is required as a cofactor. Phosphorylated. Phosphorylation upon DNA damage induces relocalization to the nuclear plasma.

Its subcellular location is the nucleus. The protein localises to the nucleolus. The protein resides in the nucleoplasm. It is found in the mitochondrion. Structure-specific nuclease with 5'-flap endonuclease and 5'-3' exonuclease activities involved in DNA replication and repair. During DNA replication, cleaves the 5'-overhanging flap structure that is generated by displacement synthesis when DNA polymerase encounters the 5'-end of a downstream Okazaki fragment. It enters the flap from the 5'-end and then tracks to cleave the flap base, leaving a nick for ligation. Also involved in the long patch base excision repair (LP-BER) pathway, by cleaving within the apurinic/apyrimidinic (AP) site-terminated flap. Acts as a genome stabilization factor that prevents flaps from equilibrating into structures that lead to duplications and deletions. Also possesses 5'-3' exonuclease activity on nicked or gapped double-stranded DNA, and exhibits RNase H activity. Also involved in replication and repair of rDNA and in repairing mitochondrial DNA. The protein is Flap endonuclease 1 of Sordaria macrospora (strain ATCC MYA-333 / DSM 997 / K(L3346) / K-hell).